The chain runs to 131 residues: Large-conductance mechanosensitive channel (131 aa).

The next 3 membrane-spanning stretches (helical) occupy residues 8–28, 30–50, and 67–87; these read FAIRGNVIDLAVGVIIGGAFG, IVSSLVNDIIMPLVGLLLGGI, and GAFIQTVVDFLIIAFSIFLFV.

Belongs to the MscL family. Homopentamer.

It is found in the cell membrane. Its function is as follows. Channel that opens in response to stretch forces in the membrane lipid bilayer. May participate in the regulation of osmotic pressure changes within the cell. The sequence is that of Large-conductance mechanosensitive channel from Geobacillus thermodenitrificans (strain NG80-2).